A 312-amino-acid polypeptide reads, in one-letter code: 2,3-dihydroxyphenylpropionate/2,3-dihydroxicinnamic acid 1,2-dioxygenase (312 aa).

His-115 serves as the catalytic Proton donor. His-179 serves as the catalytic Proton acceptor.

It belongs to the LigB/MhpB extradiol dioxygenase family. As to quaternary structure, homotetramer. The cofactor is Fe(2+).

The enzyme catalyses 3-(2,3-dihydroxyphenyl)propanoate + O2 = (2Z,4E)-2-hydroxy-6-oxonona-2,4-dienedioate + H(+). It catalyses the reaction (2E)-3-(2,3-dihydroxyphenyl)prop-2-enoate + O2 = (2Z,4E,7E)-2-hydroxy-6-oxonona-2,4,7-trienedioate + H(+). Its pathway is aromatic compound metabolism; 3-phenylpropanoate degradation. Catalyzes the non-heme iron(II)-dependent oxidative cleavage of 2,3-dihydroxyphenylpropionic acid and 2,3-dihydroxicinnamic acid into 2-hydroxy-6-ketononadienedioate and 2-hydroxy-6-ketononatrienedioate, respectively. The polypeptide is 2,3-dihydroxyphenylpropionate/2,3-dihydroxicinnamic acid 1,2-dioxygenase (Mycolicibacterium paratuberculosis (strain ATCC BAA-968 / K-10) (Mycobacterium paratuberculosis)).